A 130-amino-acid polypeptide reads, in one-letter code: Small ribosomal subunit protein uS9 (130 aa).

Positions 109–130 (RMKERKKYGLKAARRAPQFSKR) are disordered. The span at 111 to 130 (KERKKYGLKAARRAPQFSKR) shows a compositional bias: basic residues.

This sequence belongs to the universal ribosomal protein uS9 family.

The chain is Small ribosomal subunit protein uS9 from Lachnoclostridium phytofermentans (strain ATCC 700394 / DSM 18823 / ISDg) (Clostridium phytofermentans).